The sequence spans 342 residues: UDP-N-acetylglucosamine--N-acetylmuramyl-(pentapeptide) pyrophosphoryl-undecaprenol N-acetylglucosamine transferase (342 aa).

Residues 10–12, asparagine 124, serine 177, and glutamine 275 each bind UDP-N-acetyl-alpha-D-glucosamine; that span reads TGG.

This sequence belongs to the glycosyltransferase 28 family. MurG subfamily.

Its subcellular location is the cell inner membrane. The enzyme catalyses di-trans,octa-cis-undecaprenyl diphospho-N-acetyl-alpha-D-muramoyl-L-alanyl-D-glutamyl-meso-2,6-diaminopimeloyl-D-alanyl-D-alanine + UDP-N-acetyl-alpha-D-glucosamine = di-trans,octa-cis-undecaprenyl diphospho-[N-acetyl-alpha-D-glucosaminyl-(1-&gt;4)]-N-acetyl-alpha-D-muramoyl-L-alanyl-D-glutamyl-meso-2,6-diaminopimeloyl-D-alanyl-D-alanine + UDP + H(+). The protein operates within cell wall biogenesis; peptidoglycan biosynthesis. Cell wall formation. Catalyzes the transfer of a GlcNAc subunit on undecaprenyl-pyrophosphoryl-MurNAc-pentapeptide (lipid intermediate I) to form undecaprenyl-pyrophosphoryl-MurNAc-(pentapeptide)GlcNAc (lipid intermediate II). The chain is UDP-N-acetylglucosamine--N-acetylmuramyl-(pentapeptide) pyrophosphoryl-undecaprenol N-acetylglucosamine transferase from Campylobacter jejuni subsp. doylei (strain ATCC BAA-1458 / RM4099 / 269.97).